Here is a 497-residue protein sequence, read N- to C-terminus: Cytochrome P450 71A16 (497 aa).

The chain crosses the membrane as a helical span at residues 1–21 (MEMMILISLCLTTFLTILLFF). C439 provides a ligand contact to heme.

It belongs to the cytochrome P450 family. It depends on heme as a cofactor.

The protein resides in the membrane. In terms of biological role, possesses triterpene oxidizing activity. Catalyzes the C23 hydroxylation of marneral to form 23-hydroxymarneral. Catalyzes the C23 hydroxylation of marnerol to form 23-hydroxymarnerol. This chain is Cytochrome P450 71A16 (CYP71A16), found in Arabidopsis thaliana (Mouse-ear cress).